The primary structure comprises 445 residues: tRNA(Ile)-lysidine synthase (445 aa).

Serine 38 to serine 43 serves as a coordination point for ATP.

This sequence belongs to the tRNA(Ile)-lysidine synthase family.

It is found in the cytoplasm. The catalysed reaction is cytidine(34) in tRNA(Ile2) + L-lysine + ATP = lysidine(34) in tRNA(Ile2) + AMP + diphosphate + H(+). Its function is as follows. Ligates lysine onto the cytidine present at position 34 of the AUA codon-specific tRNA(Ile) that contains the anticodon CAU, in an ATP-dependent manner. Cytidine is converted to lysidine, thus changing the amino acid specificity of the tRNA from methionine to isoleucine. This is tRNA(Ile)-lysidine synthase from Neisseria gonorrhoeae (strain ATCC 700825 / FA 1090).